The primary structure comprises 408 residues: Echinulin prenyltransferase 2 (408 aa).

Dimethylallyl diphosphate contacts are provided by R94, K181, Y183, R248, K250, Y252, Q334, Y336, Y400, and Y404.

Belongs to the tryptophan dimethylallyltransferase family.

It catalyses the reaction preechinulin + dimethylallyl diphosphate = tardioxopiperazine B + diphosphate. The catalysed reaction is preechinulin + dimethylallyl diphosphate = tardioxopiperazine A + diphosphate. It carries out the reaction tardioxopiperazine A + dimethylallyl diphosphate = echinulin + diphosphate. The enzyme catalyses tardioxopiperazine A + dimethylallyl diphosphate = variecolorin L + diphosphate. It catalyses the reaction neoechinulin A + dimethylallyl diphosphate = variecolorin G + diphosphate. The catalysed reaction is neoechinulin A + dimethylallyl diphosphate = isoechinulin A + diphosphate. It carries out the reaction isoechinulin A + dimethylallyl diphosphate = dehydroechinulin + diphosphate. The enzyme catalyses neoechinulin B + dimethylallyl diphosphate = isoechinulin B + diphosphate. It functions in the pathway secondary metabolite biosynthesis. It participates in alkaloid biosynthesis. In terms of biological role, prenyltransferase; part of the gene cluster that mediates the biosynthesis of echinulin family alkaloid. The pathway begins with the biosynthesis of the cyclic dipeptide cyclo-L-Trp-L-Ala (cyclo-TA) by the NRPS echPS via condensation of L-alanine and L-tryptophan. The prenyltransferase echPT1 then catalyzes the first prenylation step, a reverse prenylation reaction at C2, to yield preechinulin. Preechinulin is the substrate of the cytochrome P450 monooxygenase echP450 that catalyzes the formation of the double bond between C10 and C11 to produce neoechulin A. The unique prenyltransferase echPT2 functions as a competitive enzyme with echP450 for preechinulin metabolization and uses preechinulin for effective regiospecific prenylations. Preechinulin is prenylated by echPT2 at C5 or C7. C7-prenylation leads to accumulation of tardioxopiperazine B without further modification by echPT2. In contrast, the C5-prenylated tardioxopiperazine A can be prenylated again by echPT2, predominantly at C7 to form echinulin or less frequently at C4 to give variecolorin L. EchPT2 also accepts neoechilunin A to produce varlecolorin G (prenylation at C5) or isoechinulin A (prenylation at C7). EchPT2 further converts isoechinulin A into dehydroechinulin. Moreover, a yet unidentified enzyme can also convert neoechilunin A into neoechilunin B by introducing a double bond between positions C14 and C17 and thus provides a further substrate to echPT2 for C5 and C7 prenylation. The polypeptide is Echinulin prenyltransferase 2 (Aspergillus ruber (Eurotium rubrum)).